Reading from the N-terminus, the 112-residue chain is UPF0342 protein SPT_0901 (112 aa).

The protein belongs to the UPF0342 family.

This chain is UPF0342 protein SPT_0901, found in Streptococcus pneumoniae (strain Taiwan19F-14).